A 131-amino-acid polypeptide reads, in one-letter code: Small ribosomal subunit protein bS6 (131 aa).

The tract at residues 96-131 (VTEASPMVKAKDERRERRDDFANETADDAEAGDSEE) is disordered. Residues 104–116 (KAKDERRERRDDF) show a composition bias toward basic and acidic residues. Acidic residues predominate over residues 120–131 (TADDAEAGDSEE).

The protein belongs to the bacterial ribosomal protein bS6 family.

Its function is as follows. Binds together with bS18 to 16S ribosomal RNA. This Salmonella arizonae (strain ATCC BAA-731 / CDC346-86 / RSK2980) protein is Small ribosomal subunit protein bS6.